Reading from the N-terminus, the 132-residue chain is Protein NrdI (132 aa).

This sequence belongs to the NrdI family.

Probably involved in ribonucleotide reductase function. This chain is Protein NrdI, found in Staphylococcus epidermidis (strain ATCC 35984 / DSM 28319 / BCRC 17069 / CCUG 31568 / BM 3577 / RP62A).